A 124-amino-acid chain; its full sequence is Small ribosomal subunit protein uS12 (124 aa).

Asp89 is modified (3-methylthioaspartic acid).

It belongs to the universal ribosomal protein uS12 family. Part of the 30S ribosomal subunit. Contacts proteins S8 and S17. May interact with IF1 in the 30S initiation complex.

Functionally, with S4 and S5 plays an important role in translational accuracy. In terms of biological role, interacts with and stabilizes bases of the 16S rRNA that are involved in tRNA selection in the A site and with the mRNA backbone. Located at the interface of the 30S and 50S subunits, it traverses the body of the 30S subunit contacting proteins on the other side and probably holding the rRNA structure together. The combined cluster of proteins S8, S12 and S17 appears to hold together the shoulder and platform of the 30S subunit. This is Small ribosomal subunit protein uS12 from Photobacterium profundum (strain SS9).